We begin with the raw amino-acid sequence, 100 residues long: Putative pterin-4-alpha-carbinolamine dehydratase (100 aa).

It belongs to the pterin-4-alpha-carbinolamine dehydratase family.

It carries out the reaction (4aS,6R)-4a-hydroxy-L-erythro-5,6,7,8-tetrahydrobiopterin = (6R)-L-erythro-6,7-dihydrobiopterin + H2O. This Rhodopseudomonas palustris (strain ATCC BAA-98 / CGA009) protein is Putative pterin-4-alpha-carbinolamine dehydratase.